The following is a 387-amino-acid chain: Succinyl-diaminopimelate desuccinylase (387 aa).

Residue His-74 participates in Zn(2+) binding. Asp-76 is a catalytic residue. Residue Asp-107 participates in Zn(2+) binding. Glu-142 acts as the Proton acceptor in catalysis. Positions 143, 171, and 360 each coordinate Zn(2+).

Belongs to the peptidase M20A family. DapE subfamily. In terms of assembly, homodimer. The cofactor is Zn(2+). It depends on Co(2+) as a cofactor.

It catalyses the reaction N-succinyl-(2S,6S)-2,6-diaminopimelate + H2O = (2S,6S)-2,6-diaminopimelate + succinate. Its pathway is amino-acid biosynthesis; L-lysine biosynthesis via DAP pathway; LL-2,6-diaminopimelate from (S)-tetrahydrodipicolinate (succinylase route): step 3/3. In terms of biological role, catalyzes the hydrolysis of N-succinyl-L,L-diaminopimelic acid (SDAP), forming succinate and LL-2,6-diaminopimelate (DAP), an intermediate involved in the bacterial biosynthesis of lysine and meso-diaminopimelic acid, an essential component of bacterial cell walls. The polypeptide is Succinyl-diaminopimelate desuccinylase (Rhodopseudomonas palustris (strain TIE-1)).